The primary structure comprises 259 residues: Deoxyribose-phosphate aldolase (259 aa).

The active-site Proton donor/acceptor is D102. The Schiff-base intermediate with acetaldehyde role is filled by K167. Residue K201 is the Proton donor/acceptor of the active site.

Belongs to the DeoC/FbaB aldolase family. DeoC type 2 subfamily.

It is found in the cytoplasm. The enzyme catalyses 2-deoxy-D-ribose 5-phosphate = D-glyceraldehyde 3-phosphate + acetaldehyde. It functions in the pathway carbohydrate degradation; 2-deoxy-D-ribose 1-phosphate degradation; D-glyceraldehyde 3-phosphate and acetaldehyde from 2-deoxy-alpha-D-ribose 1-phosphate: step 2/2. Catalyzes a reversible aldol reaction between acetaldehyde and D-glyceraldehyde 3-phosphate to generate 2-deoxy-D-ribose 5-phosphate. This is Deoxyribose-phosphate aldolase from Serratia proteamaculans (strain 568).